The sequence spans 439 residues: Ribosomal protein uS12 methylthiotransferase RimO (439 aa).

The MTTase N-terminal domain maps to 7 to 119; that stretch reads KQLCLISLGC…IDILIAKKQN (113 aa). Residues Cys16, Cys50, Cys82, Cys151, Cys155, and Cys158 each contribute to the [4Fe-4S] cluster site. The region spanning 137-368 is the Radical SAM core domain; sequence TGSSVHAYVK…ALKHQNHSFK (232 aa).

Belongs to the methylthiotransferase family. RimO subfamily. [4Fe-4S] cluster serves as cofactor.

Its subcellular location is the cytoplasm. It carries out the reaction L-aspartate(89)-[ribosomal protein uS12]-hydrogen + (sulfur carrier)-SH + AH2 + 2 S-adenosyl-L-methionine = 3-methylsulfanyl-L-aspartate(89)-[ribosomal protein uS12]-hydrogen + (sulfur carrier)-H + 5'-deoxyadenosine + L-methionine + A + S-adenosyl-L-homocysteine + 2 H(+). Its function is as follows. Catalyzes the methylthiolation of an aspartic acid residue of ribosomal protein uS12. The chain is Ribosomal protein uS12 methylthiotransferase RimO from Helicobacter pylori (strain HPAG1).